A 258-amino-acid chain; its full sequence is Short-chain dehydrogenase/reductase aba4 (258 aa).

The NADP(+) site is built by isoleucine 20, aspartate 66, and lysine 130. Active-site proton donor residues include serine 146 and tyrosine 160. Positions 160, 164, 193, and 195 each coordinate NADP(+). Lysine 164 (lowers pKa of active site Tyr) is an active-site residue.

It belongs to the short-chain dehydrogenases/reductases (SDR) family.

The protein operates within hormone biosynthesis. Functionally, short-chain dehydrogenase/reductase; part of the gene cluster that mediates the biosynthesis of abscisic acid (ABA), a phytohormone that acts antagonistically toward salicylic acid (SA), jasmonic acid (JA) and ethylene (ETH) signaling, to impede plant defense responses. The first step of the pathway catalyzes the reaction from farnesyl diphosphate to alpha-ionylideneethane performed by the alpha-ionylideneethane synthase aba3 via a three-step reaction mechanism involving 2 neutral intermediates, beta-farnesene and allofarnesene. The cytochrome P450 monooxygenase aba1 might then be involved in the conversion of alpha-ionylideneethane to alpha-ionylideneacetic acid. Alpha-ionylideneacetic acid is further converted to abscisic acid in 2 steps involving the cytochrome P450 monooxygenase aba2 and the short-chain dehydrogenase/reductase aba4, via the intermediates 1'-deoxy-ABA or 1',4'-trans-diol-ABA, depending on the order of action of these 2 enzymes. Aba2 is responsible for the hydroxylation of carbon atom C-1' and aba4 might be involved in the oxidation of the C-4' carbon atom. In Botryotinia fuckeliana (Noble rot fungus), this protein is Short-chain dehydrogenase/reductase aba4.